A 327-amino-acid polypeptide reads, in one-letter code: Metaxin-1 homolog (327 aa).

Residues 281–301 form a helical membrane-spanning segment; the sequence is IVAGVGAVLAMGAFAAWRGIY.

This sequence belongs to the metaxin family. Associates with the mitochondrial contact site and cristae organizing system (MICOS) complex (also known as MINOS or MitOS complex).

It is found in the mitochondrion outer membrane. In terms of biological role, involved in transport of proteins into the mitochondrion. Essential for embryonic development. This is Metaxin-1 homolog from Drosophila melanogaster (Fruit fly).